We begin with the raw amino-acid sequence, 58 residues long: U11-ctenitoxin-Pn1b (58 aa).

Cystine bridges form between Cys-2–Cys-16, Cys-9–Cys-22, Cys-15–Cys-40, Cys-24–Cys-38, and Cys-48–Cys-55.

In terms of tissue distribution, expressed by the venom gland.

Its subcellular location is the secreted. Non-toxic to mice. This chain is U11-ctenitoxin-Pn1b, found in Phoneutria nigriventer (Brazilian armed spider).